The chain runs to 247 residues: Cell division protein ZapD (247 aa).

This sequence belongs to the ZapD family. Interacts with FtsZ.

The protein localises to the cytoplasm. In terms of biological role, cell division factor that enhances FtsZ-ring assembly. Directly interacts with FtsZ and promotes bundling of FtsZ protofilaments, with a reduction in FtsZ GTPase activity. The sequence is that of Cell division protein ZapD from Salmonella agona (strain SL483).